The chain runs to 434 residues: ATP-dependent protease ATPase subunit HslU (434 aa).

ATP-binding positions include Ile18, 60 to 65 (GVGKTE), Asp247, Glu312, and Arg384.

The protein belongs to the ClpX chaperone family. HslU subfamily. As to quaternary structure, a double ring-shaped homohexamer of HslV is capped on each side by a ring-shaped HslU homohexamer. The assembly of the HslU/HslV complex is dependent on binding of ATP.

It is found in the cytoplasm. ATPase subunit of a proteasome-like degradation complex; this subunit has chaperone activity. The binding of ATP and its subsequent hydrolysis by HslU are essential for unfolding of protein substrates subsequently hydrolyzed by HslV. HslU recognizes the N-terminal part of its protein substrates and unfolds these before they are guided to HslV for hydrolysis. The polypeptide is ATP-dependent protease ATPase subunit HslU (Brucella suis (strain ATCC 23445 / NCTC 10510)).